The primary structure comprises 214 residues: Ribonuclease HII (214 aa).

Residues 18-208 (SRVVGVDEVG…SLLPSEAHLC (191 aa)) form the RNase H type-2 domain. A divalent metal cation contacts are provided by D24, E25, and D116.

Belongs to the RNase HII family. Mn(2+) is required as a cofactor. It depends on Mg(2+) as a cofactor.

The protein localises to the cytoplasm. The enzyme catalyses Endonucleolytic cleavage to 5'-phosphomonoester.. Endonuclease that specifically degrades the RNA of RNA-DNA hybrids. This is Ribonuclease HII from Thermosynechococcus vestitus (strain NIES-2133 / IAM M-273 / BP-1).